Consider the following 179-residue polypeptide: uncharacterized protein (179 aa).

The tract at residues 27–54 is disordered; it reads TAKKSRVQAREARAAVEENKKAQLERDK.

This is an uncharacterized protein from Escherichia coli (strain K12).